The chain runs to 858 residues: Bifunctional uridylyltransferase/uridylyl-removing enzyme (858 aa).

The segment at 1–324 (MSASVAEPPP…PATSGVTRVL (324 aa)) is uridylyltransferase. A uridylyl-removing region spans residues 325–681 (SPGRFVEKQG…ARPSPVGDAL (357 aa)). Residues 443–565 (VDQHILMVLR…VGSERRLTAL (123 aa)) form the HD domain. ACT domains lie at 682 to 761 (QVLV…PEPS) and 790 to 858 (ILSV…AIAV).

It belongs to the GlnD family. It depends on Mg(2+) as a cofactor.

The catalysed reaction is [protein-PII]-L-tyrosine + UTP = [protein-PII]-uridylyl-L-tyrosine + diphosphate. It carries out the reaction [protein-PII]-uridylyl-L-tyrosine + H2O = [protein-PII]-L-tyrosine + UMP + H(+). Its activity is regulated as follows. Uridylyltransferase (UTase) activity is inhibited by glutamine, while glutamine activates uridylyl-removing (UR) activity. Modifies, by uridylylation and deuridylylation, the PII regulatory proteins (GlnB and homologs), in response to the nitrogen status of the cell that GlnD senses through the glutamine level. Under low glutamine levels, catalyzes the conversion of the PII proteins and UTP to PII-UMP and PPi, while under higher glutamine levels, GlnD hydrolyzes PII-UMP to PII and UMP (deuridylylation). Thus, controls uridylylation state and activity of the PII proteins, and plays an important role in the regulation of nitrogen assimilation and metabolism. The sequence is that of Bifunctional uridylyltransferase/uridylyl-removing enzyme from Burkholderia pseudomallei (strain K96243).